The sequence spans 523 residues: MDKELAEKVEKRRTFAIISHPDAGKTTITEQMLLFGGVIRKAGTVKARKTGNFATSDWMEIEKKRGISVTSSVMQFEYKGKRINILDTPGHQDFSEDTYRTLMAVDSAVMVIDSAKGIEPQTKKLFKVVKQRGIPIFTFMNKLDRDGRPPLDLIAELEDLLGIEGVAMNWPIGSGQTLKGLYDIANNRVELYRKDGEDRFLPLNDDGTLPDSEALSQDPQFKDTLDEIELIKEAGNKFNREKIAMGDQTPVFFGSALTNFGVETFLNSFVDLAPAPESHTVNEDEELSPEDPEFSGFVFKIQANMNPNHRDRIAFVRIGSGEFKKGLDVTLARTGKPIRLNNATEFMSSERVQVSDAVAGDIVGLYDTGNFQIGDSIYSGKRKIVYPALPEFTPELFMRVTAKNVMKQKSFHKGMNQLVQEGAIQLYRNYQTDEYILGAVGQLQFEVFQFRMKNEYNSEVEMNSIGHRVARWIDPEQLDPQMSNSRNLLVKDRYGNPLFLFENEFAERFFRDKYPDIKLTEKL.

A tr-type G domain is found at Glu10 to Glu277. Residues Ser19–Thr26, Asp87–His91, and Asn141–Asp144 each bind GTP.

It belongs to the TRAFAC class translation factor GTPase superfamily. Classic translation factor GTPase family. PrfC subfamily.

It localises to the cytoplasm. Increases the formation of ribosomal termination complexes and stimulates activities of RF-1 and RF-2. It binds guanine nucleotides and has strong preference for UGA stop codons. It may interact directly with the ribosome. The stimulation of RF-1 and RF-2 is significantly reduced by GTP and GDP, but not by GMP. The sequence is that of Peptide chain release factor 3 from Lactobacillus acidophilus (strain ATCC 700396 / NCK56 / N2 / NCFM).